A 305-amino-acid chain; its full sequence is Olfactory receptor 5M11 (305 aa).

Residues 1 to 25 (MSNTNGSAITEFILLGLTDCPELQS) lie on the Extracellular side of the membrane. N-linked (GlcNAc...) asparagine glycosylation occurs at asparagine 5. The chain crosses the membrane as a helical span at residues 26–46 (LLFVLFLVVYLVTLLGNLGMI). Residues 47–54 (MLMRLDSR) lie on the Cytoplasmic side of the membrane. Residues 55-75 (LHTPMYFFLTNLAFVDLCYTS) form a helical membrane-spanning segment. Topologically, residues 76-98 (NATPQMSTNIVSEKTISFAGCFT) are extracellular. Cysteine 96 and cysteine 188 are disulfide-bonded. The chain crosses the membrane as a helical span at residues 99–119 (QCYIFIALLLTEFYMLAAMAY). Topologically, residues 120 to 138 (DRYVAIYDPLRYSVKTSRR) are cytoplasmic. The helical transmembrane segment at 139-159 (VCICLATFPYVYGFSDGLFQA) threads the bilayer. The Extracellular segment spans residues 160-195 (ILTFRLTFCRSSVINHFYCADPPLIKLSCSDTYVKE). A helical transmembrane segment spans residues 196 to 216 (HAMFISAGFNLSSSLTIVLVS). Topologically, residues 217-236 (YAFILAAILRIKSAEGRHKA) are cytoplasmic. The chain crosses the membrane as a helical span at residues 237–257 (FSTCGSHMMAVTLFYGTLFCM). The Extracellular portion of the chain corresponds to 258-270 (YIRPPTDKTVEES). A helical membrane pass occupies residues 271–291 (KIIAVFYTFVSPVLNPLIYSL). Residues 292 to 305 (RNKDVKQALKNVLR) lie on the Cytoplasmic side of the membrane.

Belongs to the G-protein coupled receptor 1 family.

It localises to the cell membrane. In terms of biological role, odorant receptor. In Homo sapiens (Human), this protein is Olfactory receptor 5M11 (OR5M11).